A 369-amino-acid polypeptide reads, in one-letter code: Choline-phosphate cytidylyltransferase B (369 aa).

The tract at residues 1–27 (MPVVTTDAESETGIPKSLSNEPPSETM) is disordered. 4 residues coordinate CTP: Ile-84, Phe-85, His-92, and Lys-122. The phosphocholine site is built by Lys-122 and Trp-151. Residues His-168, Asp-169, Tyr-173, Gln-195, Arg-196, Thr-197, and Ile-200 each coordinate CTP. Residues 309-369 (RMLQALSPKQ…SMSEGDEDEK (61 aa)) are disordered. Phosphoserine is present on residues Ser-315, Ser-319, Ser-322, Ser-323, Ser-329, Ser-331, and Ser-335. The span at 319–339 (SPVSSPTRSRSPSRSPSPTFS) shows a compositional bias: low complexity. Thr-345 carries the post-translational modification Phosphothreonine. 6 positions are modified to phosphoserine: Ser-346, Ser-349, Ser-350, Ser-355, Ser-360, and Ser-362. The span at 351–362 (PKAASASISSMS) shows a compositional bias: low complexity.

It belongs to the cytidylyltransferase family. Homodimer. In terms of processing, phosphorylated. Post-translationally, extensively phosphorylated. As to expression, highly expressed in testis, placenta, brain, ovary, liver and fetal lung. Expressed in brain, liver and fetal lung.

Its subcellular location is the cytoplasm. It is found in the endoplasmic reticulum. It carries out the reaction phosphocholine + CTP + H(+) = CDP-choline + diphosphate. It participates in phospholipid metabolism; phosphatidylcholine biosynthesis; phosphatidylcholine from phosphocholine: step 1/2. Catalyzes the key rate-limiting step in the CDP-choline pathway for phosphatidylcholine biosynthesis. This is Choline-phosphate cytidylyltransferase B (PCYT1B) from Homo sapiens (Human).